A 182-amino-acid chain; its full sequence is uncharacterized protein (182 aa).

The protein to M.tuberculosis Rv2313c.

This is an uncharacterized protein from Escherichia coli (strain K12).